The chain runs to 334 residues: Phosphate acyltransferase (334 aa).

Belongs to the PlsX family. In terms of assembly, homodimer. Probably interacts with PlsY.

It localises to the cytoplasm. It catalyses the reaction a fatty acyl-[ACP] + phosphate = an acyl phosphate + holo-[ACP]. It functions in the pathway lipid metabolism; phospholipid metabolism. Catalyzes the reversible formation of acyl-phosphate (acyl-PO(4)) from acyl-[acyl-carrier-protein] (acyl-ACP). This enzyme utilizes acyl-ACP as fatty acyl donor, but not acyl-CoA. The sequence is that of Phosphate acyltransferase from Caldicellulosiruptor saccharolyticus (strain ATCC 43494 / DSM 8903 / Tp8T 6331).